Consider the following 104-residue polypeptide: Large ribosomal subunit protein uL24 (104 aa).

This sequence belongs to the universal ribosomal protein uL24 family. As to quaternary structure, part of the 50S ribosomal subunit.

In terms of biological role, one of two assembly initiator proteins, it binds directly to the 5'-end of the 23S rRNA, where it nucleates assembly of the 50S subunit. One of the proteins that surrounds the polypeptide exit tunnel on the outside of the subunit. The chain is Large ribosomal subunit protein uL24 from Pseudoalteromonas translucida (strain TAC 125).